We begin with the raw amino-acid sequence, 792 residues long: DNA ligase (792 aa).

NAD(+) contacts are provided by residues 42-46 (DAEYD), 91-92 (SL), and Glu-124. Lys-126 functions as the N6-AMP-lysine intermediate in the catalytic mechanism. NAD(+)-binding residues include Arg-147, Glu-189, Lys-306, and Lys-330. Cys-424, Cys-426, Cys-448, and Cys-454 together coordinate Zn(2+). Positions 714-792 (KTDTAVAGKT…EDEWLAMVGG (79 aa)) constitute a BRCT domain.

It belongs to the NAD-dependent DNA ligase family. LigA subfamily. It depends on Mg(2+) as a cofactor. The cofactor is Mn(2+).

It carries out the reaction NAD(+) + (deoxyribonucleotide)n-3'-hydroxyl + 5'-phospho-(deoxyribonucleotide)m = (deoxyribonucleotide)n+m + AMP + beta-nicotinamide D-nucleotide.. Its function is as follows. DNA ligase that catalyzes the formation of phosphodiester linkages between 5'-phosphoryl and 3'-hydroxyl groups in double-stranded DNA using NAD as a coenzyme and as the energy source for the reaction. It is essential for DNA replication and repair of damaged DNA. This chain is DNA ligase, found in Caulobacter sp. (strain K31).